Reading from the N-terminus, the 213-residue chain is CDP-diacylglycerol--inositol 3-phosphatidyltransferase (213 aa).

Topologically, residues 1–5 are cytoplasmic; it reads MPDEN. Residues 6 to 26 traverse the membrane as a helical segment; the sequence is IFLFVPNLIGYARIVFAIISF. Position 27 (Tyr-27) is a topological domain, lumenal. The helical transmembrane segment at 28 to 48 threads the bilayer; sequence FMPCCPLTASSFYLLSGLLDA. Mg(2+) contacts are provided by Asp-47 and Asp-50. At 49 to 73 the chain is on the cytoplasmic side; the sequence is FDGHAARALNQGTRFGAMLDMLTDR. Positions 51, 55, and 61 each coordinate a CDP-1,2-diacyl-sn-glycerol. Mg(2+)-binding residues include Asp-68 and Asp-72. Residue Asp-72 is the Proton acceptor of the active site. The chain crosses the membrane as a helical span at residues 74–94; sequence CSTMCLLVNLALLYPGATLFF. Residue Gln-95 is a topological domain, lumenal. Residues 96–116 form a helical membrane-spanning segment; the sequence is ISMSLDVASHWLHLHSSVVRG. The Cytoplasmic portion of the chain corresponds to 117-139; it reads SESHKMIDLSGNPVLRIYYTSRP. Residues 140–160 form a helical membrane-spanning segment; the sequence is ALFTLCAGNELFYCLLYLFHF. Residues 161–174 lie on the Lumenal side of the membrane; that stretch reads SEGPLVGSVGLFRM. A helical membrane pass occupies residues 175–195; it reads GLWVTAPIALLKSLISVIHLI. The Cytoplasmic segment spans residues 196–213; the sequence is TAARNMAALDAADRAKKK.

The protein belongs to the CDP-alcohol phosphatidyltransferase class-I family. Requires Mn(2+) as cofactor. It depends on Mg(2+) as a cofactor. As to expression, detected in placenta (at protein level). Widely expressed. Higher expression in adult liver and skeletal muscle, slightly lower levels seen in pancreas, kidney, lung, placenta, brain, heart, leukocyte, colon, small intestine, ovary, testis, prostate, thymus and spleen. In fetus, expressed in kidney, liver, lung and brain.

Its subcellular location is the endoplasmic reticulum membrane. It is found in the cell membrane. It carries out the reaction a CDP-1,2-diacyl-sn-glycerol + myo-inositol = a 1,2-diacyl-sn-glycero-3-phospho-(1D-myo-inositol) + CMP + H(+). With respect to regulation, inhibited by PtdIns (product inhibition), phosphatidylinositol phosphate, and nucleoside di- and tri-phosphates. Its function is as follows. Catalyzes the biosynthesis of phosphatidylinositol (PtdIns) as well as PtdIns:inositol exchange reaction. May thus act to reduce an excessive cellular PtdIns content. The exchange activity is due to the reverse reaction of PtdIns synthase and is dependent on CMP, which is tightly bound to the enzyme. This chain is CDP-diacylglycerol--inositol 3-phosphatidyltransferase, found in Homo sapiens (Human).